Here is an 87-residue protein sequence, read N- to C-terminus: Chaperone NapD (87 aa).

The protein belongs to the NapD family. As to quaternary structure, interacts with the cytoplasmic NapA precursor.

The protein resides in the cytoplasm. Chaperone for NapA, the catalytic subunit of the periplasmic nitrate reductase. It binds directly and specifically to the twin-arginine signal peptide of NapA, preventing premature interaction with the Tat translocase and premature export. This is Chaperone NapD from Escherichia coli O157:H7.